Here is a 117-residue protein sequence, read N- to C-terminus: MMIIIFIELCRIADSLLWIPKSSRRTSSISTYLILLPYKKWNPNNYIKIHVLFIWIPKSSRRIYNIVCIHNIIASNDNGILTIIKLPPVPQKDPCIIFIITALLTSNHECSQINLLE.

This is an uncharacterized protein from Saccharomyces cerevisiae (strain ATCC 204508 / S288c) (Baker's yeast).